A 348-amino-acid polypeptide reads, in one-letter code: Holliday junction branch migration complex subunit RuvB (348 aa).

Residues 1-20 (MKPPARMVSPERRSDDVGDT) are disordered. Residues 1–183 (MKPPARMVSP…FGIPIRLNFY (183 aa)) form a large ATPase domain (RuvB-L) region. ATP-binding positions include Leu22, Arg23, Gly64, Lys67, Thr68, Thr69, 130–132 (EDF), Arg173, Tyr183, and Arg220. Residue Thr68 participates in Mg(2+) binding. The tract at residues 184–254 (TVEELEGIVT…IADHALSALE (71 aa)) is small ATPAse domain (RuvB-S). The tract at residues 257 to 348 (AAGLDAMDRR…QIGLFGNDDD (92 aa)) is head domain (RuvB-H). Residues Arg293, Arg312, and Arg317 each coordinate DNA.

This sequence belongs to the RuvB family. As to quaternary structure, homohexamer. Forms an RuvA(8)-RuvB(12)-Holliday junction (HJ) complex. HJ DNA is sandwiched between 2 RuvA tetramers; dsDNA enters through RuvA and exits via RuvB. An RuvB hexamer assembles on each DNA strand where it exits the tetramer. Each RuvB hexamer is contacted by two RuvA subunits (via domain III) on 2 adjacent RuvB subunits; this complex drives branch migration. In the full resolvosome a probable DNA-RuvA(4)-RuvB(12)-RuvC(2) complex forms which resolves the HJ.

The protein resides in the cytoplasm. The enzyme catalyses ATP + H2O = ADP + phosphate + H(+). The RuvA-RuvB-RuvC complex processes Holliday junction (HJ) DNA during genetic recombination and DNA repair, while the RuvA-RuvB complex plays an important role in the rescue of blocked DNA replication forks via replication fork reversal (RFR). RuvA specifically binds to HJ cruciform DNA, conferring on it an open structure. The RuvB hexamer acts as an ATP-dependent pump, pulling dsDNA into and through the RuvAB complex. RuvB forms 2 homohexamers on either side of HJ DNA bound by 1 or 2 RuvA tetramers; 4 subunits per hexamer contact DNA at a time. Coordinated motions by a converter formed by DNA-disengaged RuvB subunits stimulates ATP hydrolysis and nucleotide exchange. Immobilization of the converter enables RuvB to convert the ATP-contained energy into a lever motion, pulling 2 nucleotides of DNA out of the RuvA tetramer per ATP hydrolyzed, thus driving DNA branch migration. The RuvB motors rotate together with the DNA substrate, which together with the progressing nucleotide cycle form the mechanistic basis for DNA recombination by continuous HJ branch migration. Branch migration allows RuvC to scan DNA until it finds its consensus sequence, where it cleaves and resolves cruciform DNA. In Bradyrhizobium sp. (strain ORS 278), this protein is Holliday junction branch migration complex subunit RuvB.